The following is a 388-amino-acid chain: Galactokinase (388 aa).

Residue 33–36 (EHTD) coordinates substrate. ATP contacts are provided by residues S67 and 124–130 (GSGLSSS). The Mg(2+) site is built by S130 and E162. D174 acts as the Proton acceptor in catalysis. Y224 serves as a coordination point for substrate.

This sequence belongs to the GHMP kinase family. GalK subfamily.

It is found in the cytoplasm. The catalysed reaction is alpha-D-galactose + ATP = alpha-D-galactose 1-phosphate + ADP + H(+). Its pathway is carbohydrate metabolism; galactose metabolism. Functionally, catalyzes the transfer of the gamma-phosphate of ATP to D-galactose to form alpha-D-galactose-1-phosphate (Gal-1-P). This is Galactokinase from Streptococcus thermophilus.